The sequence spans 234 residues: Glycerol uptake facilitator protein (234 aa).

Transmembrane regions (helical) follow at residues 9 to 29 (FLGT…VVLP), 37 to 57 (GWIV…FVSG), 61 to 81 (PAHL…LPWA), 83 to 103 (VLPY…LVWL), 135 to 155 (LISE…LGLY), and 159 to 179 (AGIG…SLGG). The NPA 1 motif lies at 65 to 67 (NPA). The short motif at 186 to 188 (NPA) is the NPA 2 element. A helical membrane pass occupies residues 214 to 234 (WIPVVGPVIGAALAVLVFSLF).

Belongs to the MIP/aquaporin (TC 1.A.8) family.

It is found in the cell membrane. The catalysed reaction is glycerol(in) = glycerol(out). Mediates glycerol diffusion across the cytoplasmic membrane via a pore-type mechanism. This chain is Glycerol uptake facilitator protein (glpF), found in Streptococcus pneumoniae (strain ATCC BAA-255 / R6).